Reading from the N-terminus, the 77-residue chain is Small ribosomal subunit protein bS20 (77 aa).

This sequence belongs to the bacterial ribosomal protein bS20 family.

Functionally, binds directly to 16S ribosomal RNA. The sequence is that of Small ribosomal subunit protein bS20 from Lactococcus lactis subsp. cremoris (strain MG1363).